Reading from the N-terminus, the 688-residue chain is Glycine--tRNA ligase beta subunit (688 aa).

It belongs to the class-II aminoacyl-tRNA synthetase family. In terms of assembly, tetramer of two alpha and two beta subunits.

It localises to the cytoplasm. The enzyme catalyses tRNA(Gly) + glycine + ATP = glycyl-tRNA(Gly) + AMP + diphosphate. The polypeptide is Glycine--tRNA ligase beta subunit (Syntrophotalea carbinolica (strain DSM 2380 / NBRC 103641 / GraBd1) (Pelobacter carbinolicus)).